A 120-amino-acid chain; its full sequence is Large ribosomal subunit protein uL22 (120 aa).

Residues 1-25 (MFVNKKYTAKGKNLPSSPKKVRPIA) are disordered.

It belongs to the universal ribosomal protein uL22 family. As to quaternary structure, part of the 50S ribosomal subunit.

In terms of biological role, this protein binds specifically to 23S rRNA; its binding is stimulated by other ribosomal proteins, e.g. L4, L17, and L20. It is important during the early stages of 50S assembly. It makes multiple contacts with different domains of the 23S rRNA in the assembled 50S subunit and ribosome. Functionally, the globular domain of the protein is located near the polypeptide exit tunnel on the outside of the subunit, while an extended beta-hairpin is found that lines the wall of the exit tunnel in the center of the 70S ribosome. This is Large ribosomal subunit protein uL22 from Borrelia duttonii (strain Ly).